Consider the following 508-residue polypeptide: MGLPWYRVHTVVLNDPGRFISVHLMHTALVSGWAGSMALYELAIFDPSDVALNPMWPQGMFVLPFMTRLGVTKSWGAWSVTGESFSDPGIWSYEGVAVAHIILSGLLFLAAIWHWVYWDLDLFRDPASGELKLDLPRVFGVHLFLSGALCLAFGVFHVTGVFGPGIWVSDPYGLSGKIEPVIPSWGAEGFDPYNVGAIASHHIAAGLLGLIAGGFHVLVRPSQRLFVLLRMGNIETVLSSSIAAVFWSAFVVSGTMWYGSASTPIELFGPTRYQWDKGYFQEEIERRVQASLSDGCSLSEAWGAISPKLAFYDYIGNNPAKGGLFRSGPMNNGDGIATAWLGHAVFIDKEGNSLFVRRMPTFFETFPVILLDQNGVVRADIPFRRAESKYSIEQVGVTVRFFGGSFDTLSFNDPATVKRYARHAQLGEIFDFNRSILQSDGVFRSSPRGWFTFGHLSFALIFFFGHIWHGARTLFKYLLAGIDPHLEEEIEFGTFEKLGDDTTKKELV.

6 helical membrane passes run 21–36, 101–115, 140–156, 203–218, 237–252, and 457–472; these read SVHLMHTALVSGWAGS, IILSGLLFLAAIWHW, GVHLFLSGALCLAFGVF, IAAGLLGLIAGGFHVL, VLSSSIAAVFWSAFVV, and SFALIFFFGHIWHGAR.

It belongs to the PsbB/PsbC family. PsbB subfamily. As to quaternary structure, PSII is composed of 1 copy each of membrane proteins PsbA, PsbB, PsbC, PsbD, PsbE, PsbF, PsbH, PsbI, PsbJ, PsbK, PsbL, PsbM, PsbT, PsbY, PsbZ, Psb30/Ycf12, at least 3 peripheral proteins of the oxygen-evolving complex and a large number of cofactors. It forms dimeric complexes. The cofactor is Binds multiple chlorophylls. PSII binds additional chlorophylls, carotenoids and specific lipids..

The protein resides in the plastid. It localises to the chloroplast thylakoid membrane. One of the components of the core complex of photosystem II (PSII). It binds chlorophyll and helps catalyze the primary light-induced photochemical processes of PSII. PSII is a light-driven water:plastoquinone oxidoreductase, using light energy to abstract electrons from H(2)O, generating O(2) and a proton gradient subsequently used for ATP formation. The protein is Photosystem II CP47 reaction center protein of Euglena gracilis.